We begin with the raw amino-acid sequence, 448 residues long: Serine--tRNA ligase (448 aa).

L-serine is bound at residue 255-257; it reads TSE. 286–288 provides a ligand contact to ATP; sequence RSE. Residue E309 participates in L-serine binding. ATP is bound at residue 373-376; sequence EISS. S408 contributes to the L-serine binding site.

The protein belongs to the class-II aminoacyl-tRNA synthetase family. Type-1 seryl-tRNA synthetase subfamily. Homodimer. The tRNA molecule binds across the dimer.

The protein resides in the cytoplasm. The enzyme catalyses tRNA(Ser) + L-serine + ATP = L-seryl-tRNA(Ser) + AMP + diphosphate + H(+). The catalysed reaction is tRNA(Sec) + L-serine + ATP = L-seryl-tRNA(Sec) + AMP + diphosphate + H(+). Its pathway is aminoacyl-tRNA biosynthesis; selenocysteinyl-tRNA(Sec) biosynthesis; L-seryl-tRNA(Sec) from L-serine and tRNA(Sec): step 1/1. Catalyzes the attachment of serine to tRNA(Ser). Is also able to aminoacylate tRNA(Sec) with serine, to form the misacylated tRNA L-seryl-tRNA(Sec), which will be further converted into selenocysteinyl-tRNA(Sec). The polypeptide is Serine--tRNA ligase (Bordetella petrii (strain ATCC BAA-461 / DSM 12804 / CCUG 43448)).